The sequence spans 222 residues: Deoxyribose-phosphate aldolase (222 aa).

Aspartate 93 (proton donor/acceptor) is an active-site residue. Lysine 156 acts as the Schiff-base intermediate with acetaldehyde in catalysis. Lysine 186 (proton donor/acceptor) is an active-site residue.

The protein belongs to the DeoC/FbaB aldolase family. DeoC type 1 subfamily.

The protein localises to the cytoplasm. It carries out the reaction 2-deoxy-D-ribose 5-phosphate = D-glyceraldehyde 3-phosphate + acetaldehyde. The protein operates within carbohydrate degradation; 2-deoxy-D-ribose 1-phosphate degradation; D-glyceraldehyde 3-phosphate and acetaldehyde from 2-deoxy-alpha-D-ribose 1-phosphate: step 2/2. Its function is as follows. Catalyzes a reversible aldol reaction between acetaldehyde and D-glyceraldehyde 3-phosphate to generate 2-deoxy-D-ribose 5-phosphate. The chain is Deoxyribose-phosphate aldolase from Corynebacterium glutamicum (strain ATCC 13032 / DSM 20300 / JCM 1318 / BCRC 11384 / CCUG 27702 / LMG 3730 / NBRC 12168 / NCIMB 10025 / NRRL B-2784 / 534).